Reading from the N-terminus, the 910-residue chain is Seizure 6-like protein 2 (910 aa).

An N-terminal signal peptide occupies residues M1 to G27. The Extracellular segment spans residues L28–N844. The interval S41 to S48 is O-glycosylated at one site. Residues E65–E152 are disordered. Positions L123–G145 are enriched in pro residues. C173 and C202 are oxidised to a cystine. The region spanning C173–Y286 is the CUB 1 domain. Residues N176, N222, and N247 are each glycosylated (N-linked (GlcNAc...) asparagine). Residues L288–A347 form the Sushi 1 domain. Intrachain disulfides connect C290/C330, C316/C345, C349/C376, C464/C508, C491/C523, and C527/C553. Residues N332, N355, N373, N473, and N517 are each glycosylated (N-linked (GlcNAc...) asparagine). A CUB 2 domain is found at C349–F459. The Sushi 2 domain occupies D462–A525. The 112-residue stretch at C527–V638 folds into the CUB 3 domain. N641 is a glycosylation site (N-linked (GlcNAc...) asparagine). 3 consecutive Sushi domains span residues D642 to K701, M703 to L766, and E769 to V830. 6 disulfides stabilise this stretch: C644–C686, C672–C699, C705–C747, C733–C764, C771–C813, and C799–C828. A helical transmembrane segment spans residues L845–I865. Topologically, residues Y866–I910 are cytoplasmic.

It belongs to the SEZ6 family. Post-translationally, O-glycosylated with core 1 or possibly core 8 glycans.

It localises to the cell membrane. Its subcellular location is the endoplasmic reticulum membrane. Functionally, may contribute to specialized endoplasmic reticulum functions in neurons. The chain is Seizure 6-like protein 2 (SEZ6L2) from Homo sapiens (Human).